We begin with the raw amino-acid sequence, 358 residues long: 3-dehydroquinate synthase (358 aa).

NAD(+) is bound by residues 104–108 (GVIGD), 128–129 (TT), lysine 140, lysine 149, and 167–170 (FLNT). Zn(2+) contacts are provided by glutamate 182, histidine 246, and histidine 260.

It belongs to the sugar phosphate cyclases superfamily. Dehydroquinate synthase family. Co(2+) serves as cofactor. Requires Zn(2+) as cofactor. It depends on NAD(+) as a cofactor.

It is found in the cytoplasm. It catalyses the reaction 7-phospho-2-dehydro-3-deoxy-D-arabino-heptonate = 3-dehydroquinate + phosphate. The protein operates within metabolic intermediate biosynthesis; chorismate biosynthesis; chorismate from D-erythrose 4-phosphate and phosphoenolpyruvate: step 2/7. Functionally, catalyzes the conversion of 3-deoxy-D-arabino-heptulosonate 7-phosphate (DAHP) to dehydroquinate (DHQ). The polypeptide is 3-dehydroquinate synthase (Staphylococcus carnosus (strain TM300)).